The following is a 160-amino-acid chain: Major allergen Pru av 1 (160 aa).

Belongs to the BetVI family.

The chain is Major allergen Pru av 1 (PRUA1) from Prunus avium (Cherry).